A 445-amino-acid polypeptide reads, in one-letter code: Tryptamine benzoyltransferase 1 (445 aa).

Catalysis depends on proton acceptor residues H150 and D382.

Belongs to the plant acyltransferase family.

In terms of biological role, hydroxycinnamoyl transferase that catalyzes the transfer of an acyl from benzoyl-CoA to tryptamine, to produce benzoyl tryptamine. Serotonin and tyramine serve as acyl acceptors in vitro. Can use p-coumaroyl-CoA, and to a lesser extent caffeoyl-CoA, as acyl donors. The sequence is that of Tryptamine benzoyltransferase 1 from Oryza sativa subsp. japonica (Rice).